The following is a 237-amino-acid chain: Chaplin-B (237 aa).

A signal peptide spans 1-26 (MRRVTRNGVLAVAASGALAVTMPAYA). One can recognise a Chaplin 1 domain in the interval 42-82 (SPGLISGNTVQLPVDVPVDVCGNTVNVVGLLNPAAGNGCAD). Disordered regions lie at residues 81 to 127 (ADSG…LSGN) and 148 to 216 (GIGN…TLAG). The segment covering 101 to 115 (GSATEATSGGAAAEG) has biased composition (low complexity). The 41-residue stretch at 120–160 (SPGVLSGNGVQLPVHLPVNVSGNSVNVVGIGNPAVGNESTN) folds into the Chaplin 2 domain. The span at 169-178 (VRPPAEPEPS) shows a compositional bias: pro residues. The short motif at 202-206 (LAHTG) is the LPXTG sorting signal element. Pentaglycyl murein peptidoglycan amidated threonine is present on T205. A propeptide spans 206–237 (GTDRTLPTLAGGAALVLGGTVLYRRFRPGSGD) (removed by sortase).

It belongs to the chaplin family. Long chaplin subfamily.

The protein resides in the secreted. Its subcellular location is the cell wall. Functionally, one of 8 partially redundant surface-active proteins required for efficient formation of aerial mycelium; the short chaplins assemble into a hydrophobic, amyloidal fibrillar surface layer that envelopes and protects aerial hyphae and spores, presumably anchored to the long chaplins. Chaplins have an overlapping function with the surface-active SapB peptide; chaplins are essential on minimal medium while on rich medium both chaplins and SapB are required for efficient aerial hyphae formation. The long chaplins (ChpA, ChpB, ChpC) are not absolutely necessary for short chaplin localization or rodlet formation, but probably play a role in initiating aerial hyphae development. Chaplins are also involved in cell attachment to a hydrophobic surface. The polypeptide is Chaplin-B (Streptomyces coelicolor (strain ATCC BAA-471 / A3(2) / M145)).